We begin with the raw amino-acid sequence, 103 residues long: Large ribosomal subunit protein eL14 (103 aa).

The protein belongs to the eukaryotic ribosomal protein eL14 family.

In Pyrobaculum neutrophilum (strain DSM 2338 / JCM 9278 / NBRC 100436 / V24Sta) (Thermoproteus neutrophilus), this protein is Large ribosomal subunit protein eL14.